The primary structure comprises 148 residues: Large ribosomal subunit protein bL9 (148 aa).

The protein belongs to the bacterial ribosomal protein bL9 family.

Its function is as follows. Binds to the 23S rRNA. The sequence is that of Large ribosomal subunit protein bL9 from Macrococcus caseolyticus (strain JCSC5402) (Macrococcoides caseolyticum).